The following is a 481-amino-acid chain: Tetratricopeptide repeat protein 29 (481 aa).

Positions 1-18 (MASVGPVKTKTVTLKELT) are enriched in low complexity. The segment at 1–53 (MASVGPVKTKTVTLKELTPPIPSPEKSACKGAKPDSNHMALVPVKPSQPGSGK) is disordered. TPR repeat units follow at residues 191 to 224 (CERC…AMES), 231 to 264 (QEVR…AMAL), 271 to 310 (VEAN…SQRV), 317 to 350 (ADSL…ARAA), 357 to 390 (KRAS…SEKA), and 397 to 430 (YRAT…ARKL).

In terms of assembly, interacts with TAX-1.

It localises to the cytoplasm. Its subcellular location is the cytoskeleton. The protein resides in the flagellum axoneme. Functionally, axonemal protein which is implicated in axonemal and/or peri-axonemal structure assembly and regulates flagellum assembly and beating. The protein is Tetratricopeptide repeat protein 29 of Trypanosoma brucei brucei (strain 927/4 GUTat10.1).